A 39-amino-acid polypeptide reads, in one-letter code: Ribonuclease UK114 (39 aa).

The protein belongs to the RutC family. As to quaternary structure, monomer. The N-terminus may be blocked. Mainly expressed in the liver and kidney. Lower expression found in intestine, gizzard, glandular stomach, heart, brain and spleen.

The protein localises to the cytoplasm. Its function is as follows. Endoribonuclease responsible for the inhibition of the translation by cleaving mRNA. Inhibits cell-free protein synthesis. Cleaves phosphodiester bonds only in single-stranded RNA. This chain is Ribonuclease UK114, found in Gallus gallus (Chicken).